Here is a 32-residue protein sequence, read N- to C-terminus: Dermaseptin-L1 (32 aa).

In terms of tissue distribution, expressed by the skin glands.

The protein localises to the secreted. Its function is as follows. Antimicrobial peptide active against the Gram-negative bacterium E.coli (MIC=8 uM) but inactive against the Gram-positive bacterium S.aureus. Also inhibits growth of zoospores of the chytrid fungus B.dendrobatidis at high concentrations (above 25 uM). Shows anticancer activities since it is cytolytic against HepG2 human hepatoma-derived cells (LC(50)=45 uM). Is only weakly hemolytic on human erythrocytes. In Agalychnis lemur (Lemur leaf frog), this protein is Dermaseptin-L1.